The sequence spans 396 residues: Non-homologous end joining protein Ku (396 aa).

One can recognise a Ku domain in the interval 9-189; the sequence is ISFGLVSIPV…DVAVRPQELS (181 aa). The span at 278 to 288 shows a compositional bias: low complexity; it reads DGDAGPAAAGV. Positions 278–396 are disordered; the sequence is DGDAGPAAAG…SKTPPTRRSA (119 aa). The segment covering 294 to 312 has biased composition (basic and acidic residues); it reads DDKASDDKASDDKASDGRR. Residues 315–336 are compositionally biased toward polar residues; the sequence is RTSSVKGASSAPGTRSTARKTP. Low complexity predominate over residues 337–396; that stretch reads SSTRSTAKTNAATKTPPAKTSAAKASAAKTSAAKATSSRTAPKTAPRTPTSKTPPTRRSA.

It belongs to the prokaryotic Ku family. As to quaternary structure, homodimer. Interacts with LigD.

With LigD forms a non-homologous end joining (NHEJ) DNA repair enzyme, which repairs dsDNA breaks with reduced fidelity. Binds linear dsDNA with 5'- and 3'- overhangs but not closed circular dsDNA nor ssDNA. Recruits and stimulates the ligase activity of LigD. The polypeptide is Non-homologous end joining protein Ku (Frankia casuarinae (strain DSM 45818 / CECT 9043 / HFP020203 / CcI3)).